We begin with the raw amino-acid sequence, 287 residues long: uncharacterized protein (287 aa).

Residues 43 to 50 (GKTGVGKS), 90 to 93 (DLPG), and 156 to 159 (DKAE) contribute to the GTP site. The G domain occupies 48–138 (GKSSLCNALF…LTVDEHFYHQ (91 aa)).

To E.coli YfjP and YeeP.

This is an uncharacterized protein from Escherichia coli (strain K12).